Reading from the N-terminus, the 332-residue chain is Fructose-1,6-bisphosphatase class 1 (332 aa).

The Mg(2+) site is built by E89, D110, L112, and D113. Residues 113–116 (DGSS), N206, Y239, 257–259 (YLY), and K269 contribute to the substrate site. Position 275 (E275) interacts with Mg(2+).

It belongs to the FBPase class 1 family. In terms of assembly, homotetramer. Mg(2+) serves as cofactor.

The protein localises to the cytoplasm. It catalyses the reaction beta-D-fructose 1,6-bisphosphate + H2O = beta-D-fructose 6-phosphate + phosphate. Its pathway is carbohydrate biosynthesis; gluconeogenesis. In Salmonella gallinarum (strain 287/91 / NCTC 13346), this protein is Fructose-1,6-bisphosphatase class 1.